A 133-amino-acid polypeptide reads, in one-letter code: Ribonuclease VapC28 (133 aa).

The 124-residue stretch at 1–124 (MIVDTSAIIA…LWKGNDFGHT (124 aa)) folds into the PINc domain. Mg(2+)-binding residues include D4 and D100.

It belongs to the PINc/VapC protein family. Requires Mg(2+) as cofactor.

Toxic component of a type II toxin-antitoxin (TA) system. An RNase. Upon expression in M.smegmatis inhibits colony formation. Its toxic effect is neutralized by coexpression with cognate antitoxin VapB28. This Mycobacterium tuberculosis (strain ATCC 25618 / H37Rv) protein is Ribonuclease VapC28.